Here is a 3081-residue protein sequence, read N- to C-terminus: Cilia- and flagella-associated protein 54 (3081 aa).

Disordered regions lie at residues Ser-542–Ala-579, Thr-591–Leu-626, Pro-910–Lys-942, Ala-1406–Pro-1451, Glu-1518–Val-1586, Arg-1636–Pro-1657, Gly-2176–Pro-2210, Met-2229–Ala-2306, and Ala-2776–Gly-2806. The segment covering Gly-564–Ala-579 has biased composition (low complexity). Residues Met-1428 to Ile-1449 are compositionally biased toward pro residues. Residues Gly-1538 to Pro-1550 show a composition bias toward basic and acidic residues. Low complexity-rich tracts occupy residues Ala-1638 to Gly-1648, Ala-2181 to Ala-2199, and Glu-2240 to Gly-2269. The span at Pro-2289 to Ser-2301 shows a compositional bias: pro residues. Low complexity predominate over residues Ala-2776–Pro-2788. Residues Lys-2796–Asp-2805 show a composition bias toward gly residues.

Belongs to the CFAP54 family. Part of the PDCP1 complex composed of CFAP46, CFAP54, CFAP74 and CFAP221; the PDCP1 complex binds calmodulin.

The protein resides in the cytoplasm. It is found in the cytoskeleton. The protein localises to the cilium axoneme. This Chlamydomonas reinhardtii (Chlamydomonas smithii) protein is Cilia- and flagella-associated protein 54.